Reading from the N-terminus, the 403-residue chain is Alpha-1-antiproteinase F (403 aa).

The N-terminal stretch at Ser1 to Ala22 is a signal peptide. N-linked (GlcNAc...) asparagine glycosylation is found at Asn55, Asn92, Asn155, Asn222, and Asn256. The segment at Gly358 to Lys377 is RCL.

Belongs to the serpin family.

Its subcellular location is the secreted. In terms of biological role, inhibits elastase, chymotrypsin, cathepsin G, plasmin, and trypsin. The sequence is that of Alpha-1-antiproteinase F from Cavia porcellus (Guinea pig).